A 154-amino-acid polypeptide reads, in one-letter code: Protein X (154 aa).

The interval 68 to 117 (PCALRFTSARRMETTVNAHQILPKVLHKRTLGLSAMSTTDLEAYFKDCLF) is mitochondrial targeting sequence.

It belongs to the orthohepadnavirus protein X family. As to quaternary structure, may form homodimer. May interact with host CEBPA, CFLAR, CREB1, DDB1, E4F1, HBXIP, HSPD1/HSP60, NFKBIA, POLR2E and SMAD4. Interacts with host SMC5-SMC6 complex and induces its degradation. Interacts with host TRPC4AP; leading to prevent ubiquitination of TRPC4AP. Interacts with host PLSCR1; this interaction promotes ubiquitination and degradation of HBx and impairs HBx-mediated cell proliferation. In terms of processing, a fraction may be phosphorylated in insect cells and HepG2 cells, a human hepatoblastoma cell line. Phosphorylated in vitro by host protein kinase C or mitogen-activated protein kinase. N-acetylated in insect cells.

The protein resides in the host cytoplasm. It localises to the host nucleus. Its subcellular location is the host mitochondrion. Its function is as follows. Multifunctional protein that plays a role in silencing host antiviral defenses and promoting viral transcription. Does not seem to be essential for HBV infection. May be directly involved in development of cirrhosis and liver cancer (hepatocellular carcinoma). Most of cytosolic activities involve modulation of cytosolic calcium. The effect on apoptosis is controversial depending on the cell types in which the studies have been conducted. May induce apoptosis by localizing in mitochondria and causing loss of mitochondrial membrane potential. May also modulate apoptosis by binding host CFLAR, a key regulator of the death-inducing signaling complex (DISC). Promotes viral transcription by using the host E3 ubiquitin ligase DDB1 to target the SMC5-SMC6 complex to proteasomal degradation. This host complex would otherwise bind to viral episomal DNA, and prevents its transcription. Moderately stimulates transcription of many different viral and cellular transcription elements. Promoters and enhancers stimulated by HBx contain DNA binding sites for NF-kappa-B, AP-1, AP-2, c-EBP, ATF/CREB, or the calcium-activated factor NF-AT. The sequence is that of Protein X from Hepatitis B virus genotype E (isolate Chimpanzee/Ch195/1999) (HBV-E).